The chain runs to 425 residues: Probable aminotransferase tcpI (425 aa).

Position 256 is an N6-(pyridoxal phosphate)lysine (Lys-256).

This sequence belongs to the class-I pyridoxal-phosphate-dependent aminotransferase family. Pyridoxal 5'-phosphate is required as a cofactor.

The protein operates within secondary metabolite biosynthesis. Probable aminotransferase; part of the gene cluster that mediates the biosynthesis of an unusual class of epipolythiodioxopiperazines (ETPs) lacking the reactive thiol group important for toxicity. Firstly, L-tyrosine is prenylated by tcpD, before undergoing condensation with L-glycine in a reaction catalyzed by the NRPS tcpP leading to the diketopiperazine (DKP) backbone. Afterwards the alpha-carbon of tyrosine is oxidized by the cytochrome P450 tcpC to form a hydroxyl group. However, in contrast other ETP biosynthesis pathways studied so far, tcpC is not able to bishydroxylate the DKP at both alpha-carbon positions, but hydroxylates the alpha-carbon of the tyrosine part and the nitrogen of the glycine part. The next steps involve an alpha,beta-elimination reaction catalyzed by tcpI, a methylation by the methyltransferase tcpN the action of the four enzyme cascade tcpG/K/J/I. Due to a dysfunctional cytochrome P450 monooxygenase tcpC, the pathway leads to the biosynthesis of probable non-toxic metabolites lacking the reactive thiol group. The chain is Probable aminotransferase tcpI from Claviceps purpurea (strain 20.1) (Ergot fungus).